A 170-amino-acid polypeptide reads, in one-letter code: Acetyl-CoA decarbonylase/synthase complex subunit epsilon 1 (170 aa).

It belongs to the CdhB family. In terms of assembly, heterotetramer of two alpha and two epsilon subunits. The ACDS complex is made up of alpha, epsilon, beta, gamma and delta subunits with a probable stoichiometry of (alpha(2)epsilon(2))(4)-beta(8)-(gamma(1)delta(1))(8).

The protein operates within one-carbon metabolism; methanogenesis from acetate. Part of a complex that catalyzes the reversible cleavage of acetyl-CoA, allowing growth on acetate as sole source of carbon and energy. The alpha-epsilon subcomponent functions as a carbon monoxide dehydrogenase. The precise role of the epsilon subunit is unclear; it may have a stabilizing role within the alpha(2)epsilon(2) component and/or be involved in electron transfer to FAD during a potential FAD-mediated CO oxidation. In Methanosarcina mazei (strain ATCC BAA-159 / DSM 3647 / Goe1 / Go1 / JCM 11833 / OCM 88) (Methanosarcina frisia), this protein is Acetyl-CoA decarbonylase/synthase complex subunit epsilon 1 (cdhB1).